The primary structure comprises 353 residues: Peptide chain release factor 1 (353 aa).

Q230 carries the N5-methylglutamine modification.

The protein belongs to the prokaryotic/mitochondrial release factor family. Methylated by PrmC. Methylation increases the termination efficiency of RF1.

It localises to the cytoplasm. In terms of biological role, peptide chain release factor 1 directs the termination of translation in response to the peptide chain termination codons UAG and UAA. The chain is Peptide chain release factor 1 from Gluconobacter oxydans (strain 621H) (Gluconobacter suboxydans).